The primary structure comprises 283 residues: Pantothenate synthetase (283 aa).

30–37 (MGYLHEGH) contributes to the ATP binding site. Catalysis depends on His37, which acts as the Proton donor. Gln61 contacts (R)-pantoate. Gln61 serves as a coordination point for beta-alanine. 147–150 (GQKD) lines the ATP pocket. Gln153 is a (R)-pantoate binding site. ATP is bound by residues Val176 and 184–187 (MSSR).

Belongs to the pantothenate synthetase family. Homodimer.

The protein localises to the cytoplasm. The enzyme catalyses (R)-pantoate + beta-alanine + ATP = (R)-pantothenate + AMP + diphosphate + H(+). It functions in the pathway cofactor biosynthesis; (R)-pantothenate biosynthesis; (R)-pantothenate from (R)-pantoate and beta-alanine: step 1/1. In terms of biological role, catalyzes the condensation of pantoate with beta-alanine in an ATP-dependent reaction via a pantoyl-adenylate intermediate. This is Pantothenate synthetase from Thermoanaerobacter sp. (strain X514).